The sequence spans 76 residues: Acyl carrier protein (76 aa).

In terms of domain architecture, Carrier spans 1–76 (MATFDEVKEV…AAVDYIGSKQ (76 aa)). S36 is subject to O-(pantetheine 4'-phosphoryl)serine.

The protein belongs to the acyl carrier protein (ACP) family. 4'-phosphopantetheine is transferred from CoA to a specific serine of apo-ACP by AcpS. This modification is essential for activity because fatty acids are bound in thioester linkage to the sulfhydryl of the prosthetic group.

Its subcellular location is the cytoplasm. The protein operates within lipid metabolism; fatty acid biosynthesis. In terms of biological role, carrier of the growing fatty acid chain in fatty acid biosynthesis. The polypeptide is Acyl carrier protein (Deinococcus geothermalis (strain DSM 11300 / CIP 105573 / AG-3a)).